Here is a 446-residue protein sequence, read N- to C-terminus: ATP-dependent protease ATPase subunit HslU (446 aa).

Residues Ile17, 59–64 (GVGKTE), Asp255, Glu320, and Arg392 each bind ATP.

Belongs to the ClpX chaperone family. HslU subfamily. As to quaternary structure, a double ring-shaped homohexamer of HslV is capped on each side by a ring-shaped HslU homohexamer. The assembly of the HslU/HslV complex is dependent on binding of ATP.

The protein localises to the cytoplasm. ATPase subunit of a proteasome-like degradation complex; this subunit has chaperone activity. The binding of ATP and its subsequent hydrolysis by HslU are essential for unfolding of protein substrates subsequently hydrolyzed by HslV. HslU recognizes the N-terminal part of its protein substrates and unfolds these before they are guided to HslV for hydrolysis. In Pseudomonas fluorescens (strain ATCC BAA-477 / NRRL B-23932 / Pf-5), this protein is ATP-dependent protease ATPase subunit HslU.